A 201-amino-acid chain; its full sequence is UPF0301 protein Avi_1069 (201 aa).

Belongs to the UPF0301 (AlgH) family.

In Allorhizobium ampelinum (strain ATCC BAA-846 / DSM 112012 / S4) (Agrobacterium vitis (strain S4)), this protein is UPF0301 protein Avi_1069.